The sequence spans 313 residues: MARWRPDTAEREATPEALYLRRREFLALGAAGAVGLLLPRGARAGEPTGAALQVARKVDQAGGETPTPWDSVTGYNNFYELGTSKEDPSRNAGSLRPRPWTVTVAGEVKKPQTLDLDALTRMFPLEERVYRMRCVEAWSMVIPWVGFPLGDLVRRLEPTSRAKYVAFQTLLDRDQLPGQRRPVLPWPYVESLRIDEAAHPLALLAVGLYGRVLPGQNGAPLRLVVPWKYGFKGAKSIVRITFLADRPHTTWNDAAPDEYGFYANVNPEVDHPRWSQARERRIGEFFRRKTLPFNGYAAEVASLYAGLDLRKNY.

The tat-type signal signal peptide spans Met1–Ala44. Residues Asn76, Tyr79–Glu80, Cys134, Thr169, Asn217, Arg222, and Gly233–Lys235 each bind Mo-molybdopterin.

This sequence belongs to the MsrP family. Heterodimer of a catalytic subunit (MsrP) and a heme-binding subunit (MsrQ). Mo-molybdopterin serves as cofactor. Post-translationally, predicted to be exported by the Tat system. The position of the signal peptide cleavage has not been experimentally proven.

It localises to the periplasm. The catalysed reaction is L-methionyl-[protein] + a quinone + H2O = L-methionyl-(S)-S-oxide-[protein] + a quinol. The enzyme catalyses L-methionyl-[protein] + a quinone + H2O = L-methionyl-(R)-S-oxide-[protein] + a quinol. Its function is as follows. Part of the MsrPQ system that repairs oxidized periplasmic proteins containing methionine sulfoxide residues (Met-O), using respiratory chain electrons. Thus protects these proteins from oxidative-stress damage caused by reactive species of oxygen and chlorine generated by the host defense mechanisms. MsrPQ is essential for the maintenance of envelope integrity under bleach stress, rescuing a wide series of structurally unrelated periplasmic proteins from methionine oxidation. The catalytic subunit MsrP is non-stereospecific, being able to reduce both (R-) and (S-) diastereoisomers of methionine sulfoxide. This is Protein-methionine-sulfoxide reductase catalytic subunit MsrP from Anaeromyxobacter dehalogenans (strain 2CP-C).